Consider the following 110-residue polypeptide: Putative membrane protein insertion efficiency factor (110 aa).

It belongs to the UPF0161 family.

It localises to the cell inner membrane. Functionally, could be involved in insertion of integral membrane proteins into the membrane. This Campylobacter hominis (strain ATCC BAA-381 / DSM 21671 / CCUG 45161 / LMG 19568 / NCTC 13146 / CH001A) protein is Putative membrane protein insertion efficiency factor.